An 87-amino-acid chain; its full sequence is Omega-lycotoxin-Am1g (87 aa).

An N-terminal signal peptide occupies residues 1–17 (MKLSIFFVLFFIAIAYC). A propeptide spanning residues 18–40 (QPEFLDDEEDEVEETLPVAEEGR) is cleaved from the precursor. Disulfide bonds link C44–C59, C51–C64, C58–C84, and C66–C82.

This sequence belongs to the neurotoxin omega-lctx family. In terms of tissue distribution, expressed by the venom gland.

It localises to the secreted. Modulates Cav2.1/CACNA1A voltage-gated calcium channels (P/Q-type currents) in rat cerebellar Purkinje cells and hippocampal CA1-CA3 neurons. At saturating concentrations (&gt;10 nM) decelerates activation kinetics and slightly increases peak amplitude without affecting deactivation kinetics. In vivo, does not cause death when intravenously injected into mice. In rat models, through its activity on Cav2.1/CACNA1A, has an ameliorative effect on memory defects provoked by hyperstimulation of N-methyl-D-aspartate receptors (NMDARs) in the hippocampus. This Alopecosa marikovskyi (Wolf spider) protein is Omega-lycotoxin-Am1g.